Consider the following 563-residue polypeptide: Arginine--tRNA ligase (563 aa).

Positions 121–131 (PNIAKPFSIGH) match the 'HIGH' region motif.

This sequence belongs to the class-I aminoacyl-tRNA synthetase family. Monomer.

It localises to the cytoplasm. It carries out the reaction tRNA(Arg) + L-arginine + ATP = L-arginyl-tRNA(Arg) + AMP + diphosphate. This chain is Arginine--tRNA ligase, found in Streptococcus mutans serotype c (strain ATCC 700610 / UA159).